Reading from the N-terminus, the 469-residue chain is Glutamate--tRNA ligase 1 (469 aa).

A 'HIGH' region motif is present at residues Pro9–Gly19. 4 residues coordinate Zn(2+): Cys98, Cys100, Cys125, and Glu127. The 'KMSKS' region signature appears at Arg236–Arg240. Lys239 serves as a coordination point for ATP.

Belongs to the class-I aminoacyl-tRNA synthetase family. Glutamate--tRNA ligase type 1 subfamily. In terms of assembly, monomer. The cofactor is Zn(2+).

It is found in the cytoplasm. The catalysed reaction is tRNA(Glu) + L-glutamate + ATP = L-glutamyl-tRNA(Glu) + AMP + diphosphate. Functionally, catalyzes the attachment of glutamate to tRNA(Glu) in a two-step reaction: glutamate is first activated by ATP to form Glu-AMP and then transferred to the acceptor end of tRNA(Glu). The sequence is that of Glutamate--tRNA ligase 1 from Nitrosococcus oceani (strain ATCC 19707 / BCRC 17464 / JCM 30415 / NCIMB 11848 / C-107).